The sequence spans 423 residues: Putative competence-damage inducible protein (423 aa).

Belongs to the CinA family.

The sequence is that of Putative competence-damage inducible protein from Streptococcus uberis (strain ATCC BAA-854 / 0140J).